The chain runs to 135 residues: Phosphoinositide-interacting protein (135 aa).

The interval 1 to 21 is disordered; it reads MEVLPKALEVDERSPESKDLL. Basic and acidic residues predominate over residues 8 to 19; sequence LEVDERSPESKD. Transmembrane regions (helical) follow at residues 54–74 and 92–112; these read IIIMSVGAAILLFGVAITCVA and PAFLSLGLMMLVCGLVWVPII.

As to quaternary structure, interacts with TRPV1. As to expression, strongly expressed in most dorsal root ganglia (DRG) and trigeminal neurons. Expressed by most peptidergic (CGRP+) and non-peptidergic (IB4+) DRG neurons. Weakly expressed in other parts of the peripheral nervous system (PNS) including sympathetic and enteric neurons. Not expressed in the spinal cord.

It is found in the membrane. In terms of biological role, regulatory subunit of TRPV1, a molecular sensor of noxious heat and capsaicin. Positively regulates TRPV1 channel activity via phosphatidylinositol 4,5-bisphosphate (PIP2). Binds various phosphoinositide, including phosphatidylinositol 4,5-bisphosphate (PIP2), but not phosphatidylinositol (PI). This Mus musculus (Mouse) protein is Phosphoinositide-interacting protein (Pirt).